A 547-amino-acid chain; its full sequence is Chaperonin GroEL (547 aa).

Residues 30 to 33, K51, 87 to 91, G415, and D496 contribute to the ATP site; these read TLGP and DGTTT. Residues 528–547 form a disordered region; the sequence is KEGAAPAGGMPDMGGMGGMM. Residues 538-547 are compositionally biased toward gly residues; it reads PDMGGMGGMM.

The protein belongs to the chaperonin (HSP60) family. In terms of assembly, forms a cylinder of 14 subunits composed of two heptameric rings stacked back-to-back. Interacts with the co-chaperonin GroES.

Its subcellular location is the cytoplasm. It carries out the reaction ATP + H2O + a folded polypeptide = ADP + phosphate + an unfolded polypeptide.. Functionally, together with its co-chaperonin GroES, plays an essential role in assisting protein folding. The GroEL-GroES system forms a nano-cage that allows encapsulation of the non-native substrate proteins and provides a physical environment optimized to promote and accelerate protein folding. The sequence is that of Chaperonin GroEL from Ruegeria sp. (strain TM1040) (Silicibacter sp.).